Reading from the N-terminus, the 104-residue chain is Large ribosomal subunit protein bL21 (104 aa).

Belongs to the bacterial ribosomal protein bL21 family. In terms of assembly, part of the 50S ribosomal subunit. Contacts protein L20.

This protein binds to 23S rRNA in the presence of protein L20. The polypeptide is Large ribosomal subunit protein bL21 (Streptococcus equi subsp. equi (strain 4047)).